A 194-amino-acid chain; its full sequence is MEKLKRKIAEQGTVLSDEVLKVDSFLNHQIDPELMLAVGEEFASLFREEGVTKIVTIESSGIAPAVMAGLKLGVPVVFARKRQSLTLTENLLTASVYSFTKKTESTVAVSASHLSKDDKVLIIDDFLANGQAAKGLVSIIEQAGAKVCGIGIVIEKSFQTGREELENLGIRVESLARIASLAGGKVTFLQEVGS.

Residues Leu20 and Asn27 each coordinate xanthine. 128–132 (ANGQA) contributes to the 5-phospho-alpha-D-ribose 1-diphosphate binding site. Lys156 contributes to the xanthine binding site.

The protein belongs to the purine/pyrimidine phosphoribosyltransferase family. Xpt subfamily. In terms of assembly, homodimer.

It localises to the cytoplasm. It catalyses the reaction XMP + diphosphate = xanthine + 5-phospho-alpha-D-ribose 1-diphosphate. It participates in purine metabolism; XMP biosynthesis via salvage pathway; XMP from xanthine: step 1/1. In terms of biological role, converts the preformed base xanthine, a product of nucleic acid breakdown, to xanthosine 5'-monophosphate (XMP), so it can be reused for RNA or DNA synthesis. This is Xanthine phosphoribosyltransferase from Bacillus licheniformis (strain ATCC 14580 / DSM 13 / JCM 2505 / CCUG 7422 / NBRC 12200 / NCIMB 9375 / NCTC 10341 / NRRL NRS-1264 / Gibson 46).